The primary structure comprises 367 residues: MDRLDRRLAATLLLFSFISFSTQKTSISWCVVSEAEEQKCLDLAGSATARNIRGTLLCVRGQSPTDCMEKIKNGTADAAAMFADDIYTAGWCFGLELAAGESYNGVDGISYYVVALARRSSSDLSLLEMHERSSCHPRIRTTVGWTVPIGFLVNTSQISVDEQCNFPKAVGDFFGYSCVPGVKDREHDPRGSNPKYLCEACIGDDNERHICVNNHRERHYGEAGALRCVAENLGDVAFVKHTTIFDNMDGNNMESWAMDLELEDLKLLCPDGSEAGPFDHETCHLAVVPANAVVVRPEDKCRVWKYLERLQNAFGNTTMFSSVGYTQSDLLFSDSTHHLLRVVGSYTSWLGPSYTTVLQAFECESLC.

An N-terminal signal peptide occupies residues 1-23 (MDRLDRRLAATLLLFSFISFSTQ). Positions 27 to 363 (ISWCVVSEAE…YTTVLQAFEC (337 aa)) constitute a Transferrin-like domain.

It belongs to the transferrin family. Interacts with OTOL1. As to expression, expressed in the sacculus during the day.

The protein resides in the secreted. Required for normal otolith growth and deposition of otolin-1 in the otolith. The sequence is that of Otolith matrix protein 1 (otomp) from Oncorhynchus mykiss (Rainbow trout).